The primary structure comprises 31 residues: Cytochrome b6-f complex subunit 6 (31 aa).

Residues 4-24 form a helical membrane-spanning segment; that stretch reads ITSYFGFLLAALTLTLALFIG.

The protein belongs to the PetL family. In terms of assembly, the 4 large subunits of the cytochrome b6-f complex are cytochrome b6, subunit IV (17 kDa polypeptide, PetD), cytochrome f and the Rieske protein, while the 4 small subunits are PetG, PetL, PetM and PetN. The complex functions as a dimer.

It is found in the plastid. It localises to the chloroplast thylakoid membrane. Component of the cytochrome b6-f complex, which mediates electron transfer between photosystem II (PSII) and photosystem I (PSI), cyclic electron flow around PSI, and state transitions. PetL is important for photoautotrophic growth as well as for electron transfer efficiency and stability of the cytochrome b6-f complex. This chain is Cytochrome b6-f complex subunit 6, found in Oryza sativa subsp. japonica (Rice).